The sequence spans 425 residues: Glutamate-1-semialdehyde 2,1-aminomutase (425 aa).

Residue K265 is modified to N6-(pyridoxal phosphate)lysine.

This sequence belongs to the class-III pyridoxal-phosphate-dependent aminotransferase family. HemL subfamily. In terms of assembly, homodimer. Requires pyridoxal 5'-phosphate as cofactor.

It localises to the cytoplasm. The enzyme catalyses (S)-4-amino-5-oxopentanoate = 5-aminolevulinate. Its pathway is porphyrin-containing compound metabolism; protoporphyrin-IX biosynthesis; 5-aminolevulinate from L-glutamyl-tRNA(Glu): step 2/2. The polypeptide is Glutamate-1-semialdehyde 2,1-aminomutase (Clostridium perfringens (strain 13 / Type A)).